A 524-amino-acid polypeptide reads, in one-letter code: Putative mediator of RNA polymerase II transcription subunit 8 (524 aa).

2 coiled-coil regions span residues 117-146 (LKLHIKSFNDRIDKVDQEFENKIQQISKHK) and 175-211 (NAQQQLAQQQQQQATINALQQQQRLLNAQQQQQQQQQ). Disordered regions lie at residues 312–340 (VASPQQQVTSKQVPIQSTNKPLPQQQPSI), 356–379 (LPNTTSPPVNNNNQSPINSGIGGG), and 430–451 (QQNQQNQQNQQNQQIHQHIQHL). Over residues 314–333 (SPQQQVTSKQVPIQSTNKPL) the composition is skewed to polar residues. Low complexity predominate over residues 356 to 374 (LPNTTSPPVNNNNQSPINS). The stretch at 398-478 (IQQQIQLQQQ…LQQQFQQQQL (81 aa)) forms a coiled coil.

It belongs to the Mediator complex subunit 8 family. In terms of assembly, component of the Mediator complex. May be part of a multisubunit E3 ubiquitin-protein ligase complex.

It localises to the nucleus. It participates in protein modification; protein ubiquitination. In terms of biological role, component of the Mediator complex, a coactivator involved in the regulated transcription of nearly all RNA polymerase II-dependent genes. Mediator functions as a bridge to convey information from gene-specific regulatory proteins to the basal RNA polymerase II transcription machinery. Mediator is recruited to promoters by direct interactions with regulatory proteins and serves as a scaffold for the assembly of a functional preinitiation complex with RNA polymerase II and the general transcription factors. May play a role as a target recruitment subunit in E3 ubiquitin-protein ligase complexes and thus in ubiquitination and subsequent proteasomal degradation of target proteins. This Dictyostelium discoideum (Social amoeba) protein is Putative mediator of RNA polymerase II transcription subunit 8 (med8).